A 157-amino-acid chain; its full sequence is SUMO-conjugating enzyme UBC9 (157 aa).

N-acetylserine is present on serine 2. A UBC core domain is found at 4 to 157 (LCLQRLQEER…VLLQAKQYSK (154 aa)). The Glycyl thioester intermediate role is filled by cysteine 93.

Belongs to the ubiquitin-conjugating enzyme family. Interacts with SIZ1.

Its subcellular location is the nucleus. The protein operates within protein modification; protein sumoylation. Its function is as follows. E2 ubiquitin-like--protein ligase mediating SUMO/Smt3 attachment to septins and PCNA. Seems to be involved in degradation of S- (CLB5) and M-phase cyclins (CLB2). The sequence is that of SUMO-conjugating enzyme UBC9 (UBC9) from Saccharomyces cerevisiae (strain ATCC 204508 / S288c) (Baker's yeast).